Here is a 318-residue protein sequence, read N- to C-terminus: Isoaspartyl peptidase/L-asparaginase (318 aa).

Thr-180 functions as the Nucleophile in the catalytic mechanism. Residues 208–211 (RVSD) and 229–232 (TGIG) each bind substrate.

This sequence belongs to the Ntn-hydrolase family. Heterotetramer of two alpha and two beta chains arranged as a dimer of alpha/beta heterodimers. In terms of processing, cleaved into an alpha and beta chain by autocatalysis; this activates the enzyme. The N-terminal residue of the beta subunit is responsible for the nucleophile hydrolase activity.

The enzyme catalyses Cleavage of a beta-linked Asp residue from the N-terminus of a polypeptide.. Its function is as follows. Degrades proteins damaged by L-isoaspartyl residue formation (also known as beta-Asp residues). Probably performs the final step in the degradation of the reserve polymer cyanophycin (depolymerizes the building block L-beta-Asp-Arg). Also has L-asparaginase activity. The polypeptide is Isoaspartyl peptidase/L-asparaginase (Nostoc sp. (strain PCC 7120 / SAG 25.82 / UTEX 2576)).